Reading from the N-terminus, the 190-residue chain is Bifunctional D-Ala-D-Ala dipeptidase and D-Ala-D-Ala carboxypeptidase VanXYC (190 aa).

Mg(2+) is bound at residue glutamate 66. A dipeptide is bound by residues glutamine 67, alanine 88, serine 93, histidine 95, and aspartate 102. Residues histidine 95 and aspartate 102 each coordinate Cu(2+). Positions 95 and 102 each coordinate Zn(2+). Glutamate 153 acts as the catalytic acid/base residue in catalysis. Residues tryptophan 155 and histidine 156 each contribute to the a dipeptide site. Position 156 (histidine 156) interacts with Cu(2+). Histidine 156 contacts Zn(2+).

The protein belongs to the peptidase M15D family. In terms of assembly, homodimer.

It localises to the cytoplasm. It catalyses the reaction D-alanyl-D-alanine + H2O = 2 D-alanine. It carries out the reaction UDP-N-acetyl-alpha-D-muramoyl-L-alanyl-gamma-D-glutamyl-L-lysyl-D-alanyl-D-alanine + H2O = UDP-N-acetyl-alpha-D-muramoyl-L-alanyl-gamma-D-glutamyl-L-lysyl-D-alanine + D-alanine. In terms of biological role, bifunctional enzyme, exhibiting dipeptidase and carboxypeptidase activities. Catalyzes hydrolysis of the D-alanyl-D-alanine dipeptide. Cleaves the C-terminal D-alanine residue of UDP-muramyl-pentapeptide[Ala] (UDP-MurNAc-L-Ala-D-Glu-L-Lys-D-Ala-D-Ala). Shows no activity against the pentapeptide with a C-terminal D-serine residue. Together with VanC/VanC1 and VanT, required for vancomycin resistance in E.gallinarum strain BM4174. This is Bifunctional D-Ala-D-Ala dipeptidase and D-Ala-D-Ala carboxypeptidase VanXYC from Enterococcus gallinarum.